Consider the following 521-residue polypeptide: Protein NRT1/ PTR FAMILY 4.2 (521 aa).

12 helical membrane-spanning segments follow: residues 30–50 (IVCV…FNFV), 65–85 (ANMV…GGFI), 89–109 (FVTH…GLIL), 133–153 (AILF…KASL), 172–192 (FFDW…TVVL), 204–224 (FNIS…GLPF), 297–317 (FLGL…VAQL), 338–358 (IPVP…IPLY), 381–401 (IGLG…VEAK), 413–433 (ISVL…MLTL), 451–471 (ISTA…TTLV), and 498–518 (LFYV…IFWA).

The protein belongs to the major facilitator superfamily. Proton-dependent oligopeptide transporter (POT/PTR) (TC 2.A.17) family. In terms of tissue distribution, expressed in siliques.

Its subcellular location is the membrane. In terms of biological role, involved in abscisic acid transport. The polypeptide is Protein NRT1/ PTR FAMILY 4.2 (NPF4.2) (Arabidopsis thaliana (Mouse-ear cress)).